Reading from the N-terminus, the 294-residue chain is Bifunctional protein FolD (294 aa).

Residues 175–177 (GVS) and isoleucine 243 contribute to the NADP(+) site.

Belongs to the tetrahydrofolate dehydrogenase/cyclohydrolase family. As to quaternary structure, homodimer.

The catalysed reaction is (6R)-5,10-methylene-5,6,7,8-tetrahydrofolate + NADP(+) = (6R)-5,10-methenyltetrahydrofolate + NADPH. The enzyme catalyses (6R)-5,10-methenyltetrahydrofolate + H2O = (6R)-10-formyltetrahydrofolate + H(+). The protein operates within one-carbon metabolism; tetrahydrofolate interconversion. Its function is as follows. Catalyzes the oxidation of 5,10-methylenetetrahydrofolate to 5,10-methenyltetrahydrofolate and then the hydrolysis of 5,10-methenyltetrahydrofolate to 10-formyltetrahydrofolate. The sequence is that of Bifunctional protein FolD from Xanthomonas campestris pv. campestris (strain 8004).